The following is a 442-amino-acid chain: Adenylosuccinate synthetase (442 aa).

GTP contacts are provided by residues 30-36 (GDEGKGK) and 58-60 (GHT). Catalysis depends on aspartate 31, which acts as the Proton acceptor. Residues aspartate 31 and glycine 58 each contribute to the Mg(2+) site. IMP-binding positions include 31–34 (DEGK), 56–59 (NAGH), threonine 148, arginine 162, asparagine 241, threonine 256, and arginine 320. Histidine 59 (proton donor) is an active-site residue. 316 to 322 (TTTGRRR) lines the substrate pocket. GTP-binding positions include arginine 322, 348–350 (KLD), and 430–432 (GVG).

It belongs to the adenylosuccinate synthetase family. In terms of assembly, homodimer. It depends on Mg(2+) as a cofactor.

The protein localises to the cytoplasm. It catalyses the reaction IMP + L-aspartate + GTP = N(6)-(1,2-dicarboxyethyl)-AMP + GDP + phosphate + 2 H(+). It functions in the pathway purine metabolism; AMP biosynthesis via de novo pathway; AMP from IMP: step 1/2. Its function is as follows. Plays an important role in the de novo pathway and in the salvage pathway of purine nucleotide biosynthesis. Catalyzes the first committed step in the biosynthesis of AMP from IMP. The polypeptide is Adenylosuccinate synthetase (Trichoplax adhaerens (Trichoplax reptans)).